A 439-amino-acid polypeptide reads, in one-letter code: MGQNQSAQGGAGEKKDDKDKKKKYEPPIPTRVGKKKRRAKGPDAAMKLPQVTPHTRCRLKLLKLERIKDYLMMEDEFIRNQERLKPQDEKNEEERSKVDDLRGTPMSVGNLEEIIDDNHAIVSTSVGSEHYVSILSFVDKDQLEPGCSVLLNHKVHAVVGVLSDDTDPMVTVMKLEKAPQETYADIGGLDTQIQEIKESVELPLTHPEYYEEMGIKPPKGVILYGPPGTGKTLLAKAVANQTSATFLRVVGSELIQKYLGDGPKLVRELFRVAEEHAPSIVFIDEIDAVGTKRYDSNSGGEREIQRTMLELLNQLDGFDSRGDVKVIMATNRIETLDPALIRPGRIDRKIEFPLPDEKTKRRIFTIHTSRMTLAEDVNLSELIMAKDDLSGADIKAICTEAGLMALRERRMKVTNEDFKKSKESVLYRKKEGTPEGLYL.

Disordered regions lie at residues 1 to 48 (MGQN…AMKL) and 82 to 104 (ERLK…LRGT). Composition is skewed to basic and acidic residues over residues 12-25 (GEKK…KKYE) and 82-102 (ERLK…DDLR). 225 to 232 (GPPGTGKT) provides a ligand contact to ATP.

Belongs to the AAA ATPase family. Interacts with PSMD5.

It localises to the cytoplasm. The protein resides in the nucleus. Its function is as follows. The 26S proteasome is involved in the ATP-dependent degradation of ubiquitinated proteins. The regulatory (or ATPase) complex confers ATP dependency and substrate specificity to the 26S complex. The sequence is that of 26S proteasome regulatory subunit 4 (Rpt2) from Drosophila melanogaster (Fruit fly).